The following is a 452-amino-acid chain: Bifunctional protein GlmU (452 aa).

The tract at residues Met-1–Arg-231 is pyrophosphorylase. Residues Leu-10–Gly-13, Lys-24, Gln-77, Gly-82–Thr-83, Tyr-105–Asp-107, Gly-143, Glu-157, Asn-172, and Asn-229 each bind UDP-N-acetyl-alpha-D-glucosamine. Asp-107 provides a ligand contact to Mg(2+). A Mg(2+)-binding site is contributed by Asn-229. Residues Ala-232–Ser-252 form a linker region. An N-acetyltransferase region spans residues Gly-253 to Val-452. UDP-N-acetyl-alpha-D-glucosamine-binding residues include Arg-318 and Lys-336. His-348 functions as the Proton acceptor in the catalytic mechanism. Residues Tyr-351 and Asn-362 each coordinate UDP-N-acetyl-alpha-D-glucosamine. Acetyl-CoA-binding positions include Ala-365, Asn-371–Tyr-372, Ser-390, Ser-408, and Arg-425.

It in the N-terminal section; belongs to the N-acetylglucosamine-1-phosphate uridyltransferase family. The protein in the C-terminal section; belongs to the transferase hexapeptide repeat family. Homotrimer. Requires Mg(2+) as cofactor.

Its subcellular location is the cytoplasm. It carries out the reaction alpha-D-glucosamine 1-phosphate + acetyl-CoA = N-acetyl-alpha-D-glucosamine 1-phosphate + CoA + H(+). The catalysed reaction is N-acetyl-alpha-D-glucosamine 1-phosphate + UTP + H(+) = UDP-N-acetyl-alpha-D-glucosamine + diphosphate. It functions in the pathway nucleotide-sugar biosynthesis; UDP-N-acetyl-alpha-D-glucosamine biosynthesis; N-acetyl-alpha-D-glucosamine 1-phosphate from alpha-D-glucosamine 6-phosphate (route II): step 2/2. Its pathway is nucleotide-sugar biosynthesis; UDP-N-acetyl-alpha-D-glucosamine biosynthesis; UDP-N-acetyl-alpha-D-glucosamine from N-acetyl-alpha-D-glucosamine 1-phosphate: step 1/1. The protein operates within bacterial outer membrane biogenesis; LPS lipid A biosynthesis. In terms of biological role, catalyzes the last two sequential reactions in the de novo biosynthetic pathway for UDP-N-acetylglucosamine (UDP-GlcNAc). The C-terminal domain catalyzes the transfer of acetyl group from acetyl coenzyme A to glucosamine-1-phosphate (GlcN-1-P) to produce N-acetylglucosamine-1-phosphate (GlcNAc-1-P), which is converted into UDP-GlcNAc by the transfer of uridine 5-monophosphate (from uridine 5-triphosphate), a reaction catalyzed by the N-terminal domain. This Allorhizobium ampelinum (strain ATCC BAA-846 / DSM 112012 / S4) (Agrobacterium vitis (strain S4)) protein is Bifunctional protein GlmU.